The following is a 232-amino-acid chain: 5'-methylthioadenosine/S-adenosylhomocysteine nucleosidase (232 aa).

Glu-14 functions as the Proton acceptor in the catalytic mechanism. Substrate contacts are provided by residues Gly-80, Val-154, and 175-176 (ME). Catalysis depends on Asp-199, which acts as the Proton donor.

Belongs to the PNP/UDP phosphorylase family. MtnN subfamily.

The catalysed reaction is S-adenosyl-L-homocysteine + H2O = S-(5-deoxy-D-ribos-5-yl)-L-homocysteine + adenine. It catalyses the reaction S-methyl-5'-thioadenosine + H2O = 5-(methylsulfanyl)-D-ribose + adenine. It carries out the reaction 5'-deoxyadenosine + H2O = 5-deoxy-D-ribose + adenine. It functions in the pathway amino-acid biosynthesis; L-methionine biosynthesis via salvage pathway; S-methyl-5-thio-alpha-D-ribose 1-phosphate from S-methyl-5'-thioadenosine (hydrolase route): step 1/2. Catalyzes the irreversible cleavage of the glycosidic bond in both 5'-methylthioadenosine (MTA) and S-adenosylhomocysteine (SAH/AdoHcy) to adenine and the corresponding thioribose, 5'-methylthioribose and S-ribosylhomocysteine, respectively. Also cleaves 5'-deoxyadenosine, a toxic by-product of radical S-adenosylmethionine (SAM) enzymes, into 5-deoxyribose and adenine. This is 5'-methylthioadenosine/S-adenosylhomocysteine nucleosidase from Actinobacillus pleuropneumoniae serotype 5b (strain L20).